The sequence spans 209 residues: Translation initiation factor 2 subunit beta (209 aa).

Positions 144-202 (TIEEGKEYVVEITEVGSSGEGRTNYKGYTIFVPGAKRGETVKVRIKKVKNDVAIGEIIE) constitute a TRAM domain.

It belongs to the eIF-2-beta/eIF-5 family. As to quaternary structure, heterotrimer composed of an alpha, a beta and a gamma chain.

Functionally, eIF-2 functions in the early steps of protein synthesis by forming a ternary complex with GTP and initiator tRNA. In Thermoplasma acidophilum (strain ATCC 25905 / DSM 1728 / JCM 9062 / NBRC 15155 / AMRC-C165), this protein is Translation initiation factor 2 subunit beta (eif2b).